Consider the following 298-residue polypeptide: MAVFLWRNLFQTTKARMLQQRRASLYNGAHDYDEELIKKKLQQFAGGSINLSKEHSGIGILTLNNSRLMNAFTGTMMLELQERVTELENWKDGKGLIICGAGNTFCSGSDLNAVKAISNSQDGMNMCMFMQNTLTRLMRLPLISIALIQGKALGGGAELTTACDFRLMTPGSEIRFVHKHMGLVPGWGGAARLVRIIGSRAALQLLSRAHGVDPERALHLGLSEGTLSSSDETGSLEEARAWLSQYTEGPASVIQAVKKVVTAGRELPLEAALRTEKDVFGTVWGGPANLEALTRRQK.

This sequence belongs to the enoyl-CoA hydratase/isomerase family.

It is found in the cytoplasm. The protein resides in the cytosol. The catalysed reaction is (2S)-ethylmalonyl-CoA + H(+) = butanoyl-CoA + CO2. The enzyme catalyses (S)-methylmalonyl-CoA + H(+) = propanoyl-CoA + CO2. It catalyses the reaction (2R)-ethylmalonyl-CoA + H(+) = butanoyl-CoA + CO2. Functionally, decarboxylates ethylmalonyl-CoA, a potentially toxic metabolite, to form butyryl-CoA, suggesting it might be involved in metabolite proofreading. Acts preferentially on (S)-ethylmalonyl-CoA but also has some activity on the (R)-isomer. Also has methylmalonyl-CoA decarboxylase activity at lower level. The polypeptide is Ethylmalonyl-CoA decarboxylase (ECHDC1) (Gallus gallus (Chicken)).